The following is a 211-amino-acid chain: Imidazole glycerol phosphate synthase subunit HisH (211 aa).

The Glutamine amidotransferase type-1 domain occupies 3 to 211; that stretch reads VIAVVDYEMG…VAQVREKIPA (209 aa). The active-site Nucleophile is C81. Residues H186 and E188 contribute to the active site.

In terms of assembly, heterodimer of HisH and HisF.

The protein resides in the cytoplasm. It carries out the reaction 5-[(5-phospho-1-deoxy-D-ribulos-1-ylimino)methylamino]-1-(5-phospho-beta-D-ribosyl)imidazole-4-carboxamide + L-glutamine = D-erythro-1-(imidazol-4-yl)glycerol 3-phosphate + 5-amino-1-(5-phospho-beta-D-ribosyl)imidazole-4-carboxamide + L-glutamate + H(+). The enzyme catalyses L-glutamine + H2O = L-glutamate + NH4(+). The protein operates within amino-acid biosynthesis; L-histidine biosynthesis; L-histidine from 5-phospho-alpha-D-ribose 1-diphosphate: step 5/9. Functionally, IGPS catalyzes the conversion of PRFAR and glutamine to IGP, AICAR and glutamate. The HisH subunit catalyzes the hydrolysis of glutamine to glutamate and ammonia as part of the synthesis of IGP and AICAR. The resulting ammonia molecule is channeled to the active site of HisF. The protein is Imidazole glycerol phosphate synthase subunit HisH of Nostoc punctiforme (strain ATCC 29133 / PCC 73102).